The following is a 236-amino-acid chain: Translocon-associated protein subunit alpha (236 aa).

Residues Met-1–Ser-20 form the signal peptide. Over Asp-21–Asp-163 the chain is Lumenal. 5 N-linked (GlcNAc...) asparagine glycosylation sites follow: Asn-74, Asn-94, Asn-141, Asn-148, and Asn-152. The helical transmembrane segment at Ser-164–Gly-184 threads the bilayer. Over Lys-185–Lys-236 the chain is Cytoplasmic.

It belongs to the TRAP-alpha family. Heterotrimer of TRAP-alpha, TRAP-beta and TRAP-gamma. Post-translationally, phosphorylated in its cytoplasmic tail.

It is found in the endoplasmic reticulum membrane. In terms of biological role, TRAP proteins are part of a complex whose function is to bind calcium to the ER membrane and thereby regulate the retention of ER resident proteins. This chain is Translocon-associated protein subunit alpha (ssr1), found in Dictyostelium discoideum (Social amoeba).